We begin with the raw amino-acid sequence, 416 residues long: Meiotically up-regulated protein PB1A10.08 (416 aa).

It localises to the cytoplasm. Its function is as follows. May have a role in meiosis and sporulation. The polypeptide is Meiotically up-regulated protein PB1A10.08 (Schizosaccharomyces pombe (strain 972 / ATCC 24843) (Fission yeast)).